Consider the following 509-residue polypeptide: MRLHEILKHLCEPAHMPPVNPEIAGVVYDSRAVTPGALFVAYRGFHTDGHAYIPQALERGAAAVVYEDPAWDGRVPVPALRVPNARVALAPLAAAFYGHPGRRMRIVGVTGTDGKTTTTFLTSVALEAGGAITGLMGTVDFKIGERMWTNDSRQSTPEAPEVQALLRDMAEAGCSYAVIEATSHALSARWNRLAGSAFDIAVFTNVTQEHLDFHGTVEQYRRDKARLFEMLAEFNDAAAPFKQRKIAVVNADDPHHRMFLDAAPVSAERLTYAVHAHADVRAEDVRSTRDGLRFRVTTPWGAADARLRLTGDFNVWNALAALTVACAEGVPLERCLAALERVPGVRGRMERIEAGQPFTVLVDYAHTPGAFEKLFRIVRPLTEGQVIAVFGSAGERDRAKRPLQGEIAGRFCDLVIVTDEDPRLEDRAAIIAEIAAGAEAVGKRIGETCLCIPDRALAIRTAFAYARPGDIVLLLGKGHEGSIIYGTTPVPWDEAAEARRALAELGYGG.

Residue serine 30 coordinates UDP-N-acetyl-alpha-D-muramoyl-L-alanyl-D-glutamate. An ATP-binding site is contributed by 111–117 (GTDGKTT). Residues 155–156 (ST), threonine 182, and arginine 192 contribute to the UDP-N-acetyl-alpha-D-muramoyl-L-alanyl-D-glutamate site. Lysine 224 carries the N6-carboxylysine modification.

This sequence belongs to the MurCDEF family. MurE subfamily. Carboxylation is probably crucial for Mg(2+) binding and, consequently, for the gamma-phosphate positioning of ATP.

The protein localises to the cytoplasm. The protein operates within cell wall biogenesis; peptidoglycan biosynthesis. Its function is as follows. Catalyzes the addition of an amino acid to the nucleotide precursor UDP-N-acetylmuramoyl-L-alanyl-D-glutamate (UMAG) in the biosynthesis of bacterial cell-wall peptidoglycan. This Roseiflexus sp. (strain RS-1) protein is UDP-N-acetylmuramyl-tripeptide synthetase.